The primary structure comprises 353 residues: D-alanine--D-alanine ligase (353 aa).

An ATP-grasp domain is found at 141–349 (KAAFAAAGLP…LPDLVAQLVH (209 aa)). 176–231 (EAELGYPCFVKPANMGSSVGISKARHRDQLLAGLKEAARHDTRLVVEHGVSARELE) serves as a coordination point for ATP. The Mg(2+) site is built by Asp-302, Glu-316, and Asn-318.

It belongs to the D-alanine--D-alanine ligase family. It depends on Mg(2+) as a cofactor. Mn(2+) is required as a cofactor.

It is found in the cytoplasm. It carries out the reaction 2 D-alanine + ATP = D-alanyl-D-alanine + ADP + phosphate + H(+). The protein operates within cell wall biogenesis; peptidoglycan biosynthesis. Its function is as follows. Cell wall formation. The sequence is that of D-alanine--D-alanine ligase from Synechococcus sp. (strain CC9311).